We begin with the raw amino-acid sequence, 242 residues long: Glucosamine-6-phosphate deaminase (242 aa).

Asp-67 (proton acceptor; for enolization step) is an active-site residue. The For ring-opening step role is filled by Asn-136. Catalysis depends on His-138, which acts as the Proton acceptor; for ring-opening step. Glu-143 (for ring-opening step) is an active-site residue.

Belongs to the glucosamine/galactosamine-6-phosphate isomerase family. NagB subfamily.

It carries out the reaction alpha-D-glucosamine 6-phosphate + H2O = beta-D-fructose 6-phosphate + NH4(+). It participates in amino-sugar metabolism; N-acetylneuraminate degradation; D-fructose 6-phosphate from N-acetylneuraminate: step 5/5. Functionally, catalyzes the reversible isomerization-deamination of glucosamine 6-phosphate (GlcN6P) to form fructose 6-phosphate (Fru6P) and ammonium ion. This Clostridium beijerinckii (strain ATCC 51743 / NCIMB 8052) (Clostridium acetobutylicum) protein is Glucosamine-6-phosphate deaminase.